The primary structure comprises 58 residues: Putative transcript Y 13 protein (58 aa).

Residues 17–37 (LLGWDLNLSLFLGLCLMLLLA) form a helical membrane-spanning segment.

The protein resides in the membrane. The protein is Putative transcript Y 13 protein (TTTY13) of Homo sapiens (Human).